A 295-amino-acid polypeptide reads, in one-letter code: Ribosomal RNA small subunit methyltransferase A (295 aa).

Residues N29, L31, G56, E77, D102, and N128 each coordinate S-adenosyl-L-methionine.

It belongs to the class I-like SAM-binding methyltransferase superfamily. rRNA adenine N(6)-methyltransferase family. RsmA subfamily.

The protein resides in the cytoplasm. It carries out the reaction adenosine(1518)/adenosine(1519) in 16S rRNA + 4 S-adenosyl-L-methionine = N(6)-dimethyladenosine(1518)/N(6)-dimethyladenosine(1519) in 16S rRNA + 4 S-adenosyl-L-homocysteine + 4 H(+). Functionally, specifically dimethylates two adjacent adenosines (A1518 and A1519) in the loop of a conserved hairpin near the 3'-end of 16S rRNA in the 30S particle. May play a critical role in biogenesis of 30S subunits. This Listeria monocytogenes serotype 4a (strain HCC23) protein is Ribosomal RNA small subunit methyltransferase A.